Reading from the N-terminus, the 92-residue chain is MARSLKKNPFVANHSLRKIQNLNIKEEKKIIVTWSRASVIVPAMIGHTIAVHNGREHLPIYVTDRMVDHKLGEFAPTLLFQGHARNDKKSRR.

This sequence belongs to the universal ribosomal protein uS19 family.

It localises to the plastid. It is found in the chloroplast. Protein S19 forms a complex with S13 that binds strongly to the 16S ribosomal RNA. In Picea abies (Norway spruce), this protein is Small ribosomal subunit protein uS19c (rps19).